The primary structure comprises 364 residues: Methylthioribose-1-phosphate isomerase (364 aa).

Residues 53 to 55, Arg90, and Gln203 each bind substrate; that span reads RGA. Asp244 acts as the Proton donor in catalysis. Substrate is bound at residue 254-255; the sequence is NK.

Belongs to the eIF-2B alpha/beta/delta subunits family. MtnA subfamily.

The enzyme catalyses 5-(methylsulfanyl)-alpha-D-ribose 1-phosphate = 5-(methylsulfanyl)-D-ribulose 1-phosphate. It participates in amino-acid biosynthesis; L-methionine biosynthesis via salvage pathway; L-methionine from S-methyl-5-thio-alpha-D-ribose 1-phosphate: step 1/6. Its function is as follows. Catalyzes the interconversion of methylthioribose-1-phosphate (MTR-1-P) into methylthioribulose-1-phosphate (MTRu-1-P). This is Methylthioribose-1-phosphate isomerase from Rhizobium meliloti (strain 1021) (Ensifer meliloti).